A 322-amino-acid polypeptide reads, in one-letter code: F-actin-capping protein subunit beta (322 aa).

Belongs to the F-actin-capping protein beta subunit family. Component of the F-actin capping complex, composed of a heterodimer of an alpha and a beta subunit.

It localises to the cytoplasm. The protein localises to the cytoskeleton. The protein resides in the actin patch. Its function is as follows. F-actin-capping proteins bind in a Ca(2+)-independent manner to the fast growing ends of actin filaments (barbed end) thereby blocking the exchange of subunits at these ends. Unlike other capping proteins (such as gelsolin and severin), these proteins do not sever actin filaments. The protein is F-actin-capping protein subunit beta (cap2) of Aspergillus fumigatus (strain ATCC MYA-4609 / CBS 101355 / FGSC A1100 / Af293) (Neosartorya fumigata).